A 318-amino-acid polypeptide reads, in one-letter code: Homeobox protein Nkx-2.5 (318 aa).

A DNA-binding region (homeobox) is located at residues 137 to 196; sequence RRKPRVLFSQAQVYELERRFKQQRYLSAPERDQLASVLKLTSTQVKIWFQNRRYKCKRQR.

The protein belongs to the NK-2 homeobox family. In terms of assembly, homodimer (via the homeobox); binds DNA as homodimer. Interacts (via the homeobox) with TBX5 (via the T-box); this complex binds DNA. Interacts with HIPK1 and HIPK2, but not HIPK3. Interacts with the C-terminal zinc finger of GATA4 through its homeobox domain. Also interacts with JARID2 which represses its ability to activate transcription of ANF. Interacts with FBLIM1. Interacts with TBX18. Interacts with histone methyltransferase NSD2 (via HMG box). Interacts with NEDD9. Interacts with TBX1. In terms of tissue distribution, predominantly in the adult and embryonic heart, and to a lesser extent in lingual muscle, spleen and stomach.

Its subcellular location is the nucleus. In terms of biological role, transcription factor required for the development of the heart and the spleen. During heart development, acts as a transcriptional activator of NPPA/ANF in cooperation with GATA4. May cooperate with TBX2 to negatively modulate expression of NPPA/ANF in the atrioventricular canal. Binds to the core DNA motif of NPPA promoter. Together with PBX1, required for spleen development through a mechanism that involves CDKN2B repression. Positively regulates transcription of genes such as COL3A1 and MMP2, resulting in increased pulmonary endothelial fibrosis in response to hypoxia. The sequence is that of Homeobox protein Nkx-2.5 (Nkx2-5) from Mus musculus (Mouse).